The following is a 65-amino-acid chain: Large ribosomal subunit protein bL35 (65 aa).

The protein belongs to the bacterial ribosomal protein bL35 family.

In Desulforapulum autotrophicum (strain ATCC 43914 / DSM 3382 / VKM B-1955 / HRM2) (Desulfobacterium autotrophicum), this protein is Large ribosomal subunit protein bL35.